Consider the following 398-residue polypeptide: Nonsense-mediated decay protein 4 (398 aa).

A disordered region spans residues 327–355 (PVTSNYRGKNNRGRNNRGRRGNKRRERER). Residues 335–350 (KNNRGRNNRGRRGNKR) show a composition bias toward basic residues.

The protein resides in the cytoplasm. Involved in nonsense-mediated decay of mRNAs containing premature stop codons. This Candida albicans (strain SC5314 / ATCC MYA-2876) (Yeast) protein is Nonsense-mediated decay protein 4 (NMD4).